A 475-amino-acid polypeptide reads, in one-letter code: UDP-glycosyltransferase 1 (475 aa).

His-15 serves as the catalytic Proton acceptor. Residue His-15 participates in an anthocyanidin binding. Asp-117 serves as the catalytic Charge relay. 7 residues coordinate UDP-alpha-D-glucose: Ala-345, Gln-347, His-362, Trp-365, Asn-366, Ser-367, and Glu-370. Residue Gly-385 participates in an anthocyanidin binding. The UDP-alpha-D-glucose site is built by Glu-386 and Gln-387.

This sequence belongs to the UDP-glycosyltransferase family. In terms of tissue distribution, mostly expressed in leaves and flowers, and, to a lower extent, in roots and stems.

It catalyses the reaction (20S)-protopanaxadiol + UDP-alpha-D-glucose = (20S)-ginsenoside C-K + UDP + H(+). It carries out the reaction (20S)-ginsenoside Rg3 + UDP-alpha-D-glucose = (20S)-ginsenoside Rd + UDP + H(+). The enzyme catalyses (20S)-ginsenoside Rh2 + UDP-alpha-D-glucose = (20S)-ginsenoside F2 + UDP + H(+). The catalysed reaction is (20S)-protopanaxatriol + UDP-alpha-D-glucose = (20S)-ginsenoside F1 + UDP + H(+). It catalyses the reaction dammarenediol-II + UDP-alpha-D-glucose = (20S)-20-O-(beta-D-glucosyl)-3-hydroxydammarene + UDP + H(+). It functions in the pathway secondary metabolite biosynthesis; terpenoid biosynthesis. In terms of biological role, component of the dammarane-type triterpene saponins (e.g. ginsenosides or panaxosides) biosynthetic pathway. Glycosyltransferase that catalyzes the biosynthesis of ginsenoside F1 from protopanaxatriol (PPT). Triggers C20-OH glycosylation of ginsenoside Rg3 to produce ginsenoside Rd. Mediates the conversion of protopanaxadiol (PPD) to the ginsenoside compound K. catalyzes the production of 20S-O-beta-(D-glucosyl)-dammarenediol II form dammarenediol II (DM). The protein is UDP-glycosyltransferase 1 of Panax ginseng (Korean ginseng).